We begin with the raw amino-acid sequence, 457 residues long: UDP-N-acetylmuramate--L-alanine ligase (457 aa).

109–115 (GTDGKTT) lines the ATP pocket.

The protein belongs to the MurCDEF family.

Its subcellular location is the cytoplasm. The catalysed reaction is UDP-N-acetyl-alpha-D-muramate + L-alanine + ATP = UDP-N-acetyl-alpha-D-muramoyl-L-alanine + ADP + phosphate + H(+). It participates in cell wall biogenesis; peptidoglycan biosynthesis. Functionally, cell wall formation. This is UDP-N-acetylmuramate--L-alanine ligase from Thermotoga sp. (strain RQ2).